The following is a 98-amino-acid chain: UPF0235 protein Asuc_1977 (98 aa).

It belongs to the UPF0235 family.

The protein is UPF0235 protein Asuc_1977 of Actinobacillus succinogenes (strain ATCC 55618 / DSM 22257 / CCUG 43843 / 130Z).